The following is a 236-amino-acid chain: Large ribosomal subunit protein uL3 (236 aa).

The disordered stretch occupies residues 139-163 (ARDSSTTHEHHRHVGAIGQRKTPGK).

This sequence belongs to the universal ribosomal protein uL3 family. In terms of assembly, part of the 50S ribosomal subunit. Forms a cluster with proteins L14 and L19.

One of the primary rRNA binding proteins, it binds directly near the 3'-end of the 23S rRNA, where it nucleates assembly of the 50S subunit. This chain is Large ribosomal subunit protein uL3, found in Anaeromyxobacter sp. (strain Fw109-5).